Consider the following 303-residue polypeptide: L(+)-tartrate dehydratase subunit alpha (303 aa).

Residues Cys71, Cys190, and Cys277 each contribute to the iron-sulfur cluster site.

Belongs to the class-I fumarase family. Tetramer of two alpha and two beta subunits. It depends on iron-sulfur cluster as a cofactor.

The catalysed reaction is (2R,3R)-tartrate = oxaloacetate + H2O. The polypeptide is L(+)-tartrate dehydratase subunit alpha (ttdA) (Escherichia coli O6:K15:H31 (strain 536 / UPEC)).